The sequence spans 316 residues: MTGWRIIFMGTPEFACPTLQTLLDRTENVVAVFTQPDRPKGRGQKLQPPPVKELALRHGIPVHQPPKVRTPEVIEQIRALQPDLIVVIAFGQILPKALLEIPPQGCVNVHASLLPRYRGAAPLNWCIVNGETETGVTTMLMDVGLDTGPMLLKKTTPIAPDEDIQSLHDRMSQLGAELLGETLDGLKTGRIVPEAQDDSQSCYAPLLKKEHGLIDWQKPAVTIHNQIRGLSAWPGAVTSLGGAPLKLYRSSIGQGAGTPGTIIATGKNGIEVACGHGSLIIHELQAAGSKKMDAASFLAGHPLALGTLLMPHEVTA.

112–115 (SLLP) lines the (6S)-5,6,7,8-tetrahydrofolate pocket.

This sequence belongs to the Fmt family.

The enzyme catalyses L-methionyl-tRNA(fMet) + (6R)-10-formyltetrahydrofolate = N-formyl-L-methionyl-tRNA(fMet) + (6S)-5,6,7,8-tetrahydrofolate + H(+). Attaches a formyl group to the free amino group of methionyl-tRNA(fMet). The formyl group appears to play a dual role in the initiator identity of N-formylmethionyl-tRNA by promoting its recognition by IF2 and preventing the misappropriation of this tRNA by the elongation apparatus. In Trichlorobacter lovleyi (strain ATCC BAA-1151 / DSM 17278 / SZ) (Geobacter lovleyi), this protein is Methionyl-tRNA formyltransferase.